A 235-amino-acid polypeptide reads, in one-letter code: MSTESMIRDVELAEEALPKKMGGLQNSRRCLCLSLFSFLLVAGATTLFCLLNFGVIGPNKEEKFPNGLPLISSMAQTLTLRSSSQNSSDKPVAHVVANHQAEEQLEWLSQRANALLANGMDLKDNQLVVPADGLYLIYSQVLFKGQGCPDYVLLTHTVSRFAISYQEKVSLLSAIKSPCPKDTPEGAELKPWYEPMYLGGVFQLEKGDLLSAEVNLPKYLDITESGQVYFGVIAL.

Residues 1 to 35 lie on the Cytoplasmic side of the membrane; the sequence is MSTESMIRDVELAEEALPKKMGGLQNSRRCLCLSL. Ser2 is modified (phosphoserine; by CK1). N6-myristoyl lysine attachment occurs at residues Lys19 and Lys20. Residues 36–56 form a helical; Signal-anchor for type II membrane protein membrane-spanning segment; the sequence is FSFLLVAGATTLFCLLNFGVI. At 57–235 the chain is on the extracellular side; sequence GPNKEEKFPN…GQVYFGVIAL (179 aa). Residue Ser83 is glycosylated (O-linked (GalNAc...) serine; in soluble form). N-linked (GlcNAc...) asparagine glycosylation occurs at Asn86. The region spanning 91–235 is the THD domain; the sequence is PVAHVVANHQ…GQVYFGVIAL (145 aa). A disulfide bond links Cys148 and Cys179.

Belongs to the tumor necrosis factor family. As to quaternary structure, homotrimer. Interacts with SPPL2B. The soluble form derives from the membrane form by proteolytic processing. The membrane-bound form is further proteolytically processed by SPPL2A or SPPL2B through regulated intramembrane proteolysis producing TNF intracellular domains (ICD1 and ICD2) released in the cytosol and TNF C-domain 1 and C-domain 2 secreted into the extracellular space. In terms of processing, the membrane form, but not the soluble form, is phosphorylated on serine residues. Dephosphorylation of the membrane form occurs by binding to soluble TNFRSF1A/TNFR1. Post-translationally, O-glycosylated; glycans contain galactose, N-acetylgalactosamine and N-acetylneuraminic acid. The soluble form is demyristoylated by SIRT6, promoting its secretion.

The protein localises to the cell membrane. It is found in the membrane. It localises to the secreted. Its function is as follows. Cytokine that binds to TNFRSF1A/TNFR1 and TNFRSF1B/TNFBR. It is mainly secreted by macrophages and can induce cell death of certain tumor cell lines. It is potent pyrogen causing fever by direct action or by stimulation of interleukin-1 secretion and is implicated in the induction of cachexia, Under certain conditions it can stimulate cell proliferation and induce cell differentiation. Induces insulin resistance in adipocytes via inhibition of insulin-induced IRS1 tyrosine phosphorylation and insulin-induced glucose uptake. Induces GKAP42 protein degradation in adipocytes which is partially responsible for TNF-induced insulin resistance. Plays a role in angiogenesis by inducing VEGF production synergistically with IL1B and IL6. Promotes osteoclastogenesis and therefore mediates bone resorption. The TNF intracellular domain (ICD) form induces IL12 production in dendritic cells. This Rattus norvegicus (Rat) protein is Tumor necrosis factor (Tnf).